The chain runs to 685 residues: DNA ligase (685 aa).

NAD(+)-binding positions include 47 to 51, 96 to 97, and Glu-125; these read DSEYD and SL. The active-site N6-AMP-lysine intermediate is the Lys-127. NAD(+)-binding residues include Arg-148, Glu-185, Lys-304, and Lys-328. Residues Cys-422, Cys-425, Cys-440, and Cys-446 each contribute to the Zn(2+) site. The BRCT domain occupies 605–685; it reads ADAQPLKGQT…ALLALFAANR (81 aa).

Belongs to the NAD-dependent DNA ligase family. LigA subfamily. It depends on Mg(2+) as a cofactor. The cofactor is Mn(2+).

The catalysed reaction is NAD(+) + (deoxyribonucleotide)n-3'-hydroxyl + 5'-phospho-(deoxyribonucleotide)m = (deoxyribonucleotide)n+m + AMP + beta-nicotinamide D-nucleotide.. In terms of biological role, DNA ligase that catalyzes the formation of phosphodiester linkages between 5'-phosphoryl and 3'-hydroxyl groups in double-stranded DNA using NAD as a coenzyme and as the energy source for the reaction. It is essential for DNA replication and repair of damaged DNA. The protein is DNA ligase of Shewanella putrefaciens (strain CN-32 / ATCC BAA-453).